The primary structure comprises 71 residues: Small ribosomal subunit protein bS21 (71 aa).

Basic residues predominate over residues 48–60 (KKAAAVKRYKKKL). The interval 48–71 (KKAAAVKRYKKKLQRESIRTTRMY) is disordered. Residues 61-71 (QRESIRTTRMY) show a composition bias toward basic and acidic residues.

This sequence belongs to the bacterial ribosomal protein bS21 family.

The polypeptide is Small ribosomal subunit protein bS21 (Psychrobacter sp. (strain PRwf-1)).